The chain runs to 137 residues: ATP synthase epsilon chain, chloroplastic (137 aa).

It belongs to the ATPase epsilon chain family. In terms of assembly, F-type ATPases have 2 components, CF(1) - the catalytic core - and CF(0) - the membrane proton channel. CF(1) has five subunits: alpha(3), beta(3), gamma(1), delta(1), epsilon(1). CF(0) has three main subunits: a, b and c.

Its subcellular location is the plastid. The protein resides in the chloroplast thylakoid membrane. Its function is as follows. Produces ATP from ADP in the presence of a proton gradient across the membrane. In Pinus koraiensis (Korean pine), this protein is ATP synthase epsilon chain, chloroplastic.